A 460-amino-acid chain; its full sequence is Mercuric reductase (460 aa).

The 65-residue stretch at Met1 to Met65 folds into the HMA domain. 2 residues coordinate a metal cation: Cys11 and Cys14. Residues Ala110, Gly130, and Thr135 each contribute to the FAD site. A disulfide bond links Cys136 and Cys141. 2 residues coordinate FAD: Lys145 and Ala211. Hg(2+)-binding residues include Cys457 and Cys458.

Belongs to the class-I pyridine nucleotide-disulfide oxidoreductase family. Homodimer. It depends on FAD as a cofactor.

It carries out the reaction Hg + NADP(+) + H(+) = Hg(2+) + NADPH. Its function is as follows. Resistance to Hg(2+) in bacteria appears to be governed by a specialized system which includes mercuric reductase. MerA protein is responsible for volatilizing mercury as Hg(0). The polypeptide is Mercuric reductase (merA) (Serratia marcescens).